Consider the following 854-residue polypeptide: A-kinase anchor protein 4 (854 aa).

A propeptide spanning residues 1–188 (MMAYSDTTMM…MTAAKNTNNN (188 aa)) is cleaved from the precursor. Phosphoserine is present on residues serine 96, serine 130, serine 190, serine 213, serine 226, and serine 272. The segment at 184-207 (NTNNNQSPSAPPAKPPSTQRAVIS) is disordered. The tract at residues 219 to 232 (FYVNRLSSLVIQMA) is PKA-RI and PKA-RII subunit binding domain. The disordered stretch occupies residues 287–323 (RGTGEESREGGQKSFLYSELSNKSKSGDKQMSQRESK). Over residues 288 to 297 (GTGEESREGG) the composition is skewed to basic and acidic residues. Serine 300 is modified (phosphoserine). Tyrosine 303 bears the Phosphotyrosine mark. A phosphoserine mark is found at serine 304 and serine 307. The span at 311–323 (KSGDKQMSQRESK) shows a compositional bias: basic and acidic residues. The PKA-RI-alpha subunit binding domain stretch occupies residues 336–345 (YANQVASDMM). Serine 342, serine 432, serine 443, serine 445, serine 447, serine 450, serine 464, and serine 492 each carry phosphoserine. Phosphothreonine is present on threonine 506. Phosphoserine is present on residues serine 536, serine 581, serine 627, and serine 703.

Belongs to the AKAP110 family. As to quaternary structure, interacts with PRKAR1A and PRKAR2A. Interacts with ENO4. Interacts with QRICH2. In terms of processing, phosphorylated by STK33 during sperm flagella assembly. Testis specific; only expressed in round spermatids.

The protein localises to the cell projection. The protein resides in the cilium. It localises to the flagellum. Functionally, major structural component of sperm fibrous sheath. Plays a role in sperm motility. This is A-kinase anchor protein 4 from Homo sapiens (Human).